The sequence spans 496 residues: Cruciferin BnC2 (496 aa).

A signal peptide spans 1–23; sequence MARLSSLLYFSITVLIFLHGSTA. 2 disulfides stabilise this stretch: cysteine 30–cysteine 63 and cysteine 106–cysteine 313. 2 Cupin type-1 domains span residues 35 to 269 and 319 to 468; these read LNAL…RTAQ and DNLD…EEAR. Threonine 109 is subject to Phosphothreonine. Residues 114–170 are disordered; it reads SVFQPGSGSPFGEGQGQGQQGQGQGQGQGQGKGQQGQGKGQQGQSQGQQGQGQGFRD. Residues 122-154 are compositionally biased toward gly residues; sequence SPFGEGQGQGQQGQGQGQGQGQGKGQQGQGKGQ. At tyrosine 336 the chain carries Phosphotyrosine. A Phosphoserine modification is found at serine 338. Threonine 432 carries the post-translational modification Phosphothreonine.

This sequence belongs to the 11S seed storage protein (globulins) family. As to quaternary structure, hexamer; each subunit is composed of an acidic and a basic chain derived from a single precursor and linked by a disulfide bond.

This is a seed storage protein. The sequence is that of Cruciferin BnC2 (BnC2) from Brassica napus (Rape).